A 343-amino-acid polypeptide reads, in one-letter code: Ribosomal RNA small subunit methyltransferase C (343 aa).

The protein belongs to the methyltransferase superfamily. RsmC family. As to quaternary structure, monomer.

The protein resides in the cytoplasm. It carries out the reaction guanosine(1207) in 16S rRNA + S-adenosyl-L-methionine = N(2)-methylguanosine(1207) in 16S rRNA + S-adenosyl-L-homocysteine + H(+). In terms of biological role, specifically methylates the guanine in position 1207 of 16S rRNA in the 30S particle. In Shigella boydii serotype 4 (strain Sb227), this protein is Ribosomal RNA small subunit methyltransferase C.